Consider the following 426-residue polypeptide: 3',5'-cyclic-nucleotide phosphodiesterase (426 aa).

The tract at residues 210–229 is disordered; the sequence is DKEDAQHHSNSNSNSNNIWG.

It belongs to the cyclic nucleotide phosphodiesterase class-II family.

The catalysed reaction is a nucleoside 3',5'-cyclic phosphate + H2O = a nucleoside 5'-phosphate + H(+). In Candida albicans (Yeast), this protein is 3',5'-cyclic-nucleotide phosphodiesterase (PDE1).